The following is a 232-amino-acid chain: Ribonuclease P protein component 3 (232 aa).

It belongs to the eukaryotic/archaeal RNase P protein component 3 family. In terms of assembly, consists of a catalytic RNA component and at least 4-5 protein subunits. Forms a subcomplex with Rnp2 which stimulates the catalytic RNA.

Its subcellular location is the cytoplasm. The enzyme catalyses Endonucleolytic cleavage of RNA, removing 5'-extranucleotides from tRNA precursor.. Functionally, part of ribonuclease P, a protein complex that generates mature tRNA molecules by cleaving their 5'-ends. This chain is Ribonuclease P protein component 3, found in Methanocaldococcus jannaschii (strain ATCC 43067 / DSM 2661 / JAL-1 / JCM 10045 / NBRC 100440) (Methanococcus jannaschii).